The chain runs to 148 residues: PTS system fructose-like EIIA component (148 aa).

The 144-residue stretch at 2–145 (AALTASCIDL…DQVLALLNQT (144 aa)) folds into the PTS EIIA type-2 domain. The Tele-phosphohistidine intermediate role is filled by histidine 64. Position 64 is a phosphohistidine; by HPr (histidine 64).

Its subcellular location is the cytoplasm. Its function is as follows. The phosphoenolpyruvate-dependent sugar phosphotransferase system (sugar PTS), a major carbohydrate active transport system, catalyzes the phosphorylation of incoming sugar substrates concomitantly with their translocation across the cell membrane. The enzyme II FrvAB PTS system is involved in fructose transport. The protein is PTS system fructose-like EIIA component of Escherichia coli (strain K12).